We begin with the raw amino-acid sequence, 966 residues long: Protein STICHEL-like 4 (966 aa).

Disordered regions lie at residues Arg-64–Ser-118 and Arg-200–Asn-237. Positions Leu-75–Glu-84 are enriched in basic and acidic residues. The span at Pro-98–Thr-108 shows a compositional bias: polar residues. The span at Pro-109–Ser-118 shows a compositional bias: basic and acidic residues. Positions Ser-208–Val-217 are enriched in polar residues. Over residues Arg-219 to Gln-236 the composition is skewed to basic and acidic residues. Gly-384–Thr-391 lines the ATP pocket. Residues Cys-403, Cys-412, Cys-415, and Cys-418 each coordinate Zn(2+). The stretch at Ser-650 to Leu-678 forms a coiled coil. The span at Phe-706 to Ser-717 shows a compositional bias: polar residues. The interval Phe-706–Phe-733 is disordered.

Belongs to the DnaX/STICHEL family.

This chain is Protein STICHEL-like 4, found in Arabidopsis thaliana (Mouse-ear cress).